The primary structure comprises 67 residues: Small ribosomal subunit protein eS27 (67 aa).

Zn(2+)-binding residues include C22, C25, C41, and C44. The C4-type zinc-finger motif lies at 22–44; it reads CPDCGNEQITFSHAAMVVRCLVC.

The protein belongs to the eukaryotic ribosomal protein eS27 family. Part of the 30S ribosomal subunit. Zn(2+) serves as cofactor.

The polypeptide is Small ribosomal subunit protein eS27 (Pyrobaculum aerophilum (strain ATCC 51768 / DSM 7523 / JCM 9630 / CIP 104966 / NBRC 100827 / IM2)).